The primary structure comprises 92 residues: uncharacterized protein (92 aa).

3 consecutive transmembrane segments (helical) span residues 1 to 21 (MNIYVWLFAIIALSFSALVGL), 30 to 50 (ANVLVGESIITVVAGTLIVVI), and 62 to 82 (IALAIFICGVVGAFAFCKVIG).

This sequence to M.thermoautotrophicum MTH1250.

Its subcellular location is the cell membrane. This is an uncharacterized protein from Methanocaldococcus jannaschii (strain ATCC 43067 / DSM 2661 / JAL-1 / JCM 10045 / NBRC 100440) (Methanococcus jannaschii).